The primary structure comprises 317 residues: Melanocyte-stimulating hormone receptor (317 aa).

At methionine 1 to glutamate 37 the chain is on the extracellular side. Asparagine 29 is a glycosylation site (N-linked (GlcNAc...) asparagine). Residues valine 38 to isoleucine 63 form a helical membrane-spanning segment. Residues alanine 64–proline 72 lie on the Cytoplasmic side of the membrane. The chain crosses the membrane as a helical span at residues methionine 73 to leucine 93. Topologically, residues glutamate 94–asparagine 118 are extracellular. A helical membrane pass occupies residues valine 119–valine 140. Residues aspartate 141–arginine 163 are Cytoplasmic-facing. The chain crosses the membrane as a helical span at residues isoleucine 164 to tyrosine 183. The Extracellular portion of the chain corresponds to asparagine 184–cysteine 191. Residues leucine 192 to leucine 211 traverse the membrane as a helical segment. At alanine 212–alanine 240 the chain is on the cytoplasmic side. Residues alanine 241 to leucine 266 form a helical membrane-spanning segment. The Extracellular segment spans residues cysteine 267–asparagine 279. The helical transmembrane segment at phenylalanine 280–phenylalanine 300 threads the bilayer. The Cytoplasmic segment spans residues arginine 301–tryptophan 317. A lipid anchor (S-palmitoyl cysteine) is attached at cysteine 315.

This sequence belongs to the G-protein coupled receptor 1 family. In terms of assembly, interacts with MGRN1, but does not undergo MGRN1-mediated ubiquitination; this interaction competes with GNAS-binding and thus inhibits agonist-induced cAMP production. Interacts with OPN3; the interaction results in a decrease in MC1R-mediated cAMP signaling and ultimately a decrease in melanin production in melanocytes.

The protein localises to the cell membrane. In terms of biological role, receptor for MSH (alpha, beta and gamma) and ACTH. The activity of this receptor is mediated by G proteins which activate adenylate cyclase. Mediates melanogenesis, the production of eumelanin (black/brown) and phaeomelanin (red/yellow), via regulation of cAMP signaling in melanocytes. This is Melanocyte-stimulating hormone receptor (MC1R) from Dama dama (Fallow deer).